Here is a 259-residue protein sequence, read N- to C-terminus: Protein CDI (259 aa).

Residues 236–259 (FADLWLNEMEEYNKENKKEADNAK) are a coiled coil.

Mostly expressed in pollen grains and pollen tubes, and, at low levels, in seedlings, roots, stems, leaves, flowers and siliques.

The protein resides in the cytoplasm. It is found in the cytosol. Probable nucleotide-diphospho-sugar transferase required for pollen germination and tube growth. The polypeptide is Protein CDI (Arabidopsis thaliana (Mouse-ear cress)).